Reading from the N-terminus, the 274-residue chain is MVEAPRIRITYEKIRHTKNHRIVSISGPSYKRMNVDLIDYIIRKWWFAGKYIYLMLISSNKPTYVIRTHMMMHGRILVGNQDSPTKRAFMIIQLDNDIVLRWYRSQITLLDPNCLAEIKTNYTICTTRQAIMDSIKLMKYDLSNNRFDYNLFQSHLKNGINIHSSEIITDFLLDQEYFPGVGNILQQEALYDCKILPLKKVQDIDEPMFDCLCNSLKKIIDLLYESYKFRESGKEFGPILRIYRKSLCPLGHKTIRKKIGLRNRMTTWCPVCQL.

Residues 241–274 (RIYRKSLCPLGHKTIRKKIGLRNRMTTWCPVCQL) form an FPG-type; degenerate zinc finger.

The protein belongs to the FPG family.

This Acanthamoeba polyphaga mimivirus (APMV) protein is Endonuclease 8-like L720.